The chain runs to 256 residues: Nickel import ATP-binding protein NikD (256 aa).

The 240-residue stretch at 6-245 folds into the ABC transporter domain; sequence LEIRGLRIET…PASATARTLL (240 aa). Residue 38-45 participates in ATP binding; it reads GASGSGKS.

Belongs to the ABC transporter superfamily. Nickel importer (TC 3.A.1.5.3) family. As to quaternary structure, the complex is composed of two ATP-binding proteins (NikD and NikE), two transmembrane proteins (NikB and NikC) and a solute-binding protein (NikA).

The protein resides in the cell inner membrane. The enzyme catalyses Ni(2+)(out) + ATP + H2O = Ni(2+)(in) + ADP + phosphate + H(+). Functionally, part of the ABC transporter complex NikABCDE involved in nickel import. Responsible for energy coupling to the transport system. The polypeptide is Nickel import ATP-binding protein NikD (Pseudomonas putida (strain ATCC 47054 / DSM 6125 / CFBP 8728 / NCIMB 11950 / KT2440)).